Reading from the N-terminus, the 446-residue chain is Fatty acid desaturase 2 (446 aa).

Topologically, residues 1–132 are cytoplasmic; that stretch reads MGMGGQSGEG…EDMRLFKSNP (132 aa). The Cytochrome b5 heme-binding domain maps to 20–97; the sequence is EAQYSWEEIQ…LKPLYIGELA (78 aa). The chain crosses the membrane as a helical span at residues 133-153; that stretch reads AFFIFYLFHILLIEFLAWCTL. Position 154 (H154) is a topological domain, lumenal. The helical transmembrane segment at 155–175 threads the bilayer; sequence YLGTGWIPAIITVLLLTISQA. At 176-265 the chain is on the cytoplasmic side; sequence QAGWLQHDFG…IKYLPYNHQH (90 aa). Residues 182–186 carry the Histidine box-1 motif; that stretch reads HDFGH. The Histidine box-2 signature appears at 219 to 223; that stretch reads HFQHH. The chain crosses the membrane as a helical span at residues 266 to 286; it reads LYFFLIGPPLLIPVYFTVQII. Residues 287-307 lie on the Lumenal side of the membrane; sequence KTMIARKDWVDLAWSVSYYVR. Residues 308-328 traverse the membrane as a helical segment; it reads FFFTFVPFFGVLGSLALLNAV. Residues 329 to 446 are Cytoplasmic-facing; the sequence is RFFESHWFVW…QLWLDAYLHK (118 aa). The Histidine box-3 motif lies at 384–388; it reads QIEHH.

Belongs to the fatty acid desaturase type 1 family.

It is found in the endoplasmic reticulum membrane. It functions in the pathway lipid metabolism; polyunsaturated fatty acid biosynthesis. In terms of biological role, component of a lipid metabolic pathway that catalyzes biosynthesis of highly unsaturated fatty acids (HUFA) from precursor essential polyunsaturated fatty acids (PUFA) linoleic acid (LA) (18:2n-6) and alpha-linolenic acid (ALA) (18:3n-3). Catalyzes the first and rate limiting step in this pathway which is the desaturation of LA (18:2n-6) and ALA (18:3n-3) into gamma-linoleic acid (GLA) (18:3n-6) and stearidonic acid (18:4n-3) respectively and other desaturation steps. Highly unsaturated fatty acids (HUFA) play pivotal roles in many biological functions. In Xenopus laevis (African clawed frog), this protein is Fatty acid desaturase 2 (fads2).